Reading from the N-terminus, the 100-residue chain is Small ribosomal subunit protein uS14 (100 aa).

It belongs to the universal ribosomal protein uS14 family. In terms of assembly, part of the 30S ribosomal subunit. Contacts proteins S3 and S10.

In terms of biological role, binds 16S rRNA, required for the assembly of 30S particles and may also be responsible for determining the conformation of the 16S rRNA at the A site. This is Small ribosomal subunit protein uS14 from Synechococcus sp. (strain CC9605).